Consider the following 419-residue polypeptide: Phosphatidylcholine:ceramide cholinephosphotransferase 1 (419 aa).

In terms of domain architecture, SAM spans W13–E76. At S14 the chain carries Phosphoserine. A run of 5 helical transmembrane segments spans residues L142–V162, F190–L210, F221–L241, M282–I302, and L310–L330. H291 is an active-site residue. The Cytoplasmic portion of the chain corresponds to A331–T419. Residues H334 and D338 contribute to the active site.

Belongs to the sphingomyelin synthase family.

The protein localises to the golgi apparatus membrane. It carries out the reaction an N-acylsphing-4-enine + a 1,2-diacyl-sn-glycero-3-phosphocholine = a sphingomyelin + a 1,2-diacyl-sn-glycerol. It catalyses the reaction 1-(9Z-octadecenoyl)-2-acyl-sn-3-glycerol + a sphingomyelin = a 1-(9Z-octadecenoyl)-2-acyl-sn-glycero-3-phosphocholine + an N-acylsphing-4-enine. The catalysed reaction is N-hexadecanoylsphinganine + a 1,2-diacyl-sn-glycero-3-phosphocholine = N-hexadecanoyl-sphinganine-1-phosphocholine + a 1,2-diacyl-sn-glycerol. The enzyme catalyses N-hexadecanoyl-(4R)-hydroxysphinganine + a 1,2-diacyl-sn-glycero-3-phosphocholine = N-hexadecanoyl-(4R)-hydroxysphinganine-phosphocholine + a 1,2-diacyl-sn-glycerol. It carries out the reaction an N-acylsphing-4-enine + a 1,2-diacyl-sn-glycero-3-phosphoethanolamine = an N-acylsphing-4-enine 1-phosphoethanolamine + a 1,2-diacyl-sn-glycerol. It participates in sphingolipid metabolism. Major sphingomyelin synthase at the Golgi apparatus. Catalyzes the reversible transfer of phosphocholine moiety in sphingomyelin biosynthesis: in the forward reaction transfers phosphocholine head group of phosphatidylcholine (PC) on to ceramide (CER) to form ceramide phosphocholine (sphingomyelin, SM) and diacylglycerol (DAG) as by-product, and in the reverse reaction transfers phosphocholine from SM to DAG to form PC and CER. The direction of the reaction depends on the levels of CER and DAG in Golgi membranes. Converts the newly synthesized CER, that is transported from the endoplasmic reticulum to the trans-Golgi by the Cer transport protein (CERT), to SM. Can form a heteromeric complex with glucosylceramide synthase (GCS) increasing SMS activity and reducing glucosylceramide synthesis, a critical mechanism that controls the metabolic fate of CER in the Golgi. Does not use free phosphorylcholine or CDP-choline as donor. Can also transfer phosphoethanolamine head group of phosphatidylethanolamine (PE) on to CER to form ceramide phosphoethanolamine (CPE). Regulates receptor-mediated signal transduction via mitogenic DAG and proapoptotic CER, as well as via SM, a structural component of membrane rafts that serve as platforms for signal transduction and protein sorting. Plays a role in secretory transport via regulation of DAG pool at the Golgi apparatus and its downstream effects on PRKD1. This is Phosphatidylcholine:ceramide cholinephosphotransferase 1 (Sgms1) from Rattus norvegicus (Rat).